The chain runs to 246 residues: Probable phosphatase ASA_1316 (246 aa).

Zn(2+)-binding residues include His-8, His-10, His-16, His-41, Glu-74, His-102, His-132, Asp-193, and His-195.

The protein belongs to the PHP family. The cofactor is Zn(2+).

This Aeromonas salmonicida (strain A449) protein is Probable phosphatase ASA_1316.